The sequence spans 222 residues: Vesicle-associated membrane protein 724 (222 aa).

Residues 1 to 197 (MGQESFIYSF…LWYQNMKIKL (197 aa)) are Cytoplasmic-facing. The 106-residue stretch at 10-115 (FVARGTMILA…SLNKEFGPVM (106 aa)) folds into the Longin domain. The 61-residue stretch at 131–191 (KLIKVKAQVS…TQVRRKLWYQ (61 aa)) folds into the v-SNARE coiled-coil homology domain. A helical; Anchor for type IV membrane protein membrane pass occupies residues 198 to 218 (VVLGILLLLVLIIWISVCHGF). Residues 219-222 (NCTD) are Vesicular-facing.

The protein belongs to the synaptobrevin family. Expressed in flowers, leaves, stems and roots.

The protein resides in the cell membrane. It localises to the early endosome membrane. Functionally, involved in the targeting and/or fusion of transport vesicles to their target membrane. This Arabidopsis thaliana (Mouse-ear cress) protein is Vesicle-associated membrane protein 724.